Reading from the N-terminus, the 147-residue chain is Myoglobin (147 aa).

Ala2 is modified (N-acetylalanine). Residues 2–141 enclose the Globin domain; that stretch reads ADFDAVLKCW…IIADLEANYK (140 aa). Residue His60 coordinates nitrite. Residue His60 participates in O2 binding. A heme b-binding site is contributed by His89.

It belongs to the globin family. Monomeric.

Its subcellular location is the cytoplasm. The protein resides in the sarcoplasm. The catalysed reaction is Fe(III)-heme b-[protein] + nitric oxide + H2O = Fe(II)-heme b-[protein] + nitrite + 2 H(+). The enzyme catalyses H2O2 + AH2 = A + 2 H2O. Monomeric heme protein which primary function is to store oxygen and facilitate its diffusion within muscle tissues. Reversibly binds oxygen through a pentacoordinated heme iron and enables its timely and efficient release as needed during periods of heightened demand. Depending on the oxidative conditions of tissues and cells, and in addition to its ability to bind oxygen, it also has a nitrite reductase activity whereby it regulates the production of bioactive nitric oxide. Under stress conditions, like hypoxia and anoxia, it also protects cells against reactive oxygen species thanks to its pseudoperoxidase activity. This chain is Myoglobin (mb), found in Thunnus albacares (Yellowfin tuna).